The primary structure comprises 77 residues: U18-lycotoxin-Ls1a (77 aa).

The first 22 residues, methionine 1 to alanine 22, serve as a signal peptide directing secretion. Positions glutamate 23–arginine 34 are excised as a propeptide. Disulfide bonds link cysteine 36–cysteine 51, cysteine 43–cysteine 56, cysteine 50–cysteine 67, and cysteine 58–cysteine 65.

Belongs to the neurotoxin 02 (plectoxin) family. In terms of tissue distribution, expressed by the venom gland.

It is found in the secreted. This Lycosa singoriensis (Wolf spider) protein is U18-lycotoxin-Ls1a.